Consider the following 543-residue polypeptide: CTP synthase (543 aa).

The tract at residues 1–267 (MAKFVFVTGG…CREVLDVLNL (267 aa)) is amidoligase domain. Residue serine 13 coordinates CTP. Serine 13 lines the UTP pocket. Position 14 to 19 (14 to 19 (SIGKGI)) interacts with ATP. Tyrosine 54 is an L-glutamine binding site. Aspartate 71 serves as a coordination point for ATP. The Mg(2+) site is built by aspartate 71 and glutamate 141. CTP is bound by residues 148 to 150 (DIE), 188 to 193 (KTKPTQ), and lysine 224. UTP is bound by residues 188-193 (KTKPTQ) and lysine 224. The Glutamine amidotransferase type-1 domain maps to 292 to 534 (KVALVGKYVQ…IEAAQQRLPN (243 aa)). Glycine 354 provides a ligand contact to L-glutamine. Cysteine 381 serves as the catalytic Nucleophile; for glutamine hydrolysis. L-glutamine is bound by residues 382-385 (LGMQ), glutamate 405, and arginine 462. Active-site residues include histidine 507 and glutamate 509.

This sequence belongs to the CTP synthase family. Homotetramer.

The catalysed reaction is UTP + L-glutamine + ATP + H2O = CTP + L-glutamate + ADP + phosphate + 2 H(+). It carries out the reaction L-glutamine + H2O = L-glutamate + NH4(+). The enzyme catalyses UTP + NH4(+) + ATP = CTP + ADP + phosphate + 2 H(+). The protein operates within pyrimidine metabolism; CTP biosynthesis via de novo pathway; CTP from UDP: step 2/2. With respect to regulation, allosterically activated by GTP, when glutamine is the substrate; GTP has no effect on the reaction when ammonia is the substrate. The allosteric effector GTP functions by stabilizing the protein conformation that binds the tetrahedral intermediate(s) formed during glutamine hydrolysis. Inhibited by the product CTP, via allosteric rather than competitive inhibition. Functionally, catalyzes the ATP-dependent amination of UTP to CTP with either L-glutamine or ammonia as the source of nitrogen. Regulates intracellular CTP levels through interactions with the four ribonucleotide triphosphates. The polypeptide is CTP synthase (Synechococcus sp. (strain WH7803)).